Here is a 256-residue protein sequence, read N- to C-terminus: Ubiquinone/menaquinone biosynthesis C-methyltransferase UbiE (256 aa).

Residues 1 to 12 (MNDQRKGDHAEP) are compositionally biased toward basic and acidic residues. The tract at residues 1 to 23 (MNDQRKGDHAEPTTHFGYQDVPE) is disordered. Residues Thr79, Asp100, and 128-129 (DA) each bind S-adenosyl-L-methionine.

This sequence belongs to the class I-like SAM-binding methyltransferase superfamily. MenG/UbiE family.

The catalysed reaction is a 2-demethylmenaquinol + S-adenosyl-L-methionine = a menaquinol + S-adenosyl-L-homocysteine + H(+). It catalyses the reaction a 2-methoxy-6-(all-trans-polyprenyl)benzene-1,4-diol + S-adenosyl-L-methionine = a 5-methoxy-2-methyl-3-(all-trans-polyprenyl)benzene-1,4-diol + S-adenosyl-L-homocysteine + H(+). The protein operates within quinol/quinone metabolism; menaquinone biosynthesis; menaquinol from 1,4-dihydroxy-2-naphthoate: step 2/2. It participates in cofactor biosynthesis; ubiquinone biosynthesis. Methyltransferase required for the conversion of demethylmenaquinol (DMKH2) to menaquinol (MKH2) and the conversion of 2-polyprenyl-6-methoxy-1,4-benzoquinol (DDMQH2) to 2-polyprenyl-3-methyl-6-methoxy-1,4-benzoquinol (DMQH2). The polypeptide is Ubiquinone/menaquinone biosynthesis C-methyltransferase UbiE (Pseudomonas putida (strain ATCC 700007 / DSM 6899 / JCM 31910 / BCRC 17059 / LMG 24140 / F1)).